The chain runs to 69 residues: Toxin Lc a (69 aa).

Intrachain disulfides connect cysteine 3–cysteine 20, cysteine 13–cysteine 41, cysteine 45–cysteine 56, and cysteine 57–cysteine 62.

The protein belongs to the three-finger toxin family. Long-chain subfamily. Type II alpha-neurotoxin sub-subfamily. In terms of tissue distribution, expressed by the venom gland.

It is found in the secreted. Binds with high affinity to muscular nicotinic acetylcholine receptors (nAChRs), whereas it binds with a low affinity to neuronal alpha-7/CHRNA7 nAChRs. This is Toxin Lc a from Laticauda colubrina (Yellow-lipped sea krait).